A 296-amino-acid chain; its full sequence is m7GpppN-mRNA hydrolase NUDT17 (296 aa).

Positions 90 to 236 (GRGVDVGVAV…DSGSPCGPLP (147 aa)) constitute a Nudix hydrolase domain. The short motif at 129–150 (GHVELGEQLLEAGLRELQEETG) is the Nudix box element. Positions 144 and 148 each coordinate Mg(2+).

It belongs to the Nudix hydrolase family. Requires Mg(2+) as cofactor. It depends on Mn(2+) as a cofactor.

It carries out the reaction a 5'-end (N(7)-methyl 5'-triphosphoguanosine)-ribonucleoside in mRNA + H2O = N(7)-methyl-GDP + a 5'-end phospho-ribonucleoside in mRNA + 2 H(+). Its function is as follows. Acts as a decapping enzyme capable of hydrolyzing monomethylated capped RNAs (in vitro). Hydrolyzes monomethylated capped RNA after alpha and beta phosphates to form N(7)-methyl-GDP. Shows low activity towards unmethylated capped RNA. The chain is m7GpppN-mRNA hydrolase NUDT17 (nudt17) from Xenopus laevis (African clawed frog).